The following is a 611-amino-acid chain: Glutamine--fructose-6-phosphate aminotransferase [isomerizing] (611 aa).

C2 serves as the catalytic Nucleophile; for GATase activity. The 218-residue stretch at 2–219 (CGIVGAVAER…EGDIAEIRRD (218 aa)) folds into the Glutamine amidotransferase type-2 domain. 2 SIS domains span residues 287-427 (AADL…VRGT) and 460-601 (IAEL…VDQP). K606 serves as the catalytic For Fru-6P isomerization activity.

As to quaternary structure, homodimer.

Its subcellular location is the cytoplasm. The enzyme catalyses D-fructose 6-phosphate + L-glutamine = D-glucosamine 6-phosphate + L-glutamate. Catalyzes the first step in hexosamine metabolism, converting fructose-6P into glucosamine-6P using glutamine as a nitrogen source. The sequence is that of Glutamine--fructose-6-phosphate aminotransferase [isomerizing] from Pseudomonas putida (strain ATCC 47054 / DSM 6125 / CFBP 8728 / NCIMB 11950 / KT2440).